A 475-amino-acid chain; its full sequence is Tubulin gamma-1 chain (475 aa).

142–148 (AGGTGSG) provides a ligand contact to GTP. The interval 453 to 475 (VKRGNGPVDSKSEDSRSVTSAGS) is disordered.

This sequence belongs to the tubulin family. Interacts with Ote.

The protein localises to the cytoplasm. Its subcellular location is the cytoskeleton. It localises to the microtubule organizing center. It is found in the centrosome. The protein resides in the perinuclear region. Tubulin is the major constituent of microtubules. The gamma chain is found at microtubule organizing centers (MTOC) such as the spindle poles or the centrosome, suggesting that it is involved in the minus-end nucleation of microtubule assembly. This is Tubulin gamma-1 chain (gammaTub23C) from Drosophila melanogaster (Fruit fly).